An 825-amino-acid polypeptide reads, in one-letter code: E3 ubiquitin-protein ligase ICP0 (825 aa).

The segment covering Met1–Arg10 has biased composition (polar residues). The segment at Met1 to Gly121 is disordered. Acidic residues predominate over residues Asp46–Asp57. The segment at Cys126–Asn167 adopts an RING-type zinc-finger fold. Disordered stretches follow at residues Arg221–Pro312, Pro325–Gly683, and Arg803–Glu825. A compositionally biased stretch (acidic residues) spans Thr242–Asp251. 3 stretches are compositionally biased toward low complexity: residues Thr273–Arg283, Pro290–Gly303, and Pro350–Asp367. Residues Ser368 to Pro379 are compositionally biased toward pro residues. 2 stretches are compositionally biased toward low complexity: residues Gly380–Ser394 and Pro402–Gly439. Residues Arg456–Ser468 show a composition bias toward polar residues. A compositionally biased stretch (gly residues) spans Gly479 to Val491. Low complexity-rich tracts occupy residues Pro492–Ala510 and Asp519–Pro540. Basic and acidic residues predominate over residues Arg552–His563. The segment covering Ala567 to Ala641 has biased composition (low complexity). A compositionally biased stretch (basic residues) spans Gly658–Arg667. The segment covering Gly811–Glu825 has biased composition (low complexity).

Post-translationally, auto-ubiquitinated.

It carries out the reaction S-ubiquitinyl-[E2 ubiquitin-conjugating enzyme]-L-cysteine + [acceptor protein]-L-lysine = [E2 ubiquitin-conjugating enzyme]-L-cysteine + N(6)-ubiquitinyl-[acceptor protein]-L-lysine.. Functionally, evades nuclear antiviral defenses triggered by dsDNA viruses. Acts during the initial stages of lytic infection and the reactivation of latent viral genome. Prevents the antiviral effect of nuclear bodies by degrading host PML and SP100. Prevents antiviral response to viral DNA induced by IFI16 by degrading it. Additionally, inhibits host IRF3 nuclear signaling to prevent interferon production by the infected cells. The chain is E3 ubiquitin-protein ligase ICP0 (RL2) from Homo sapiens (Human).